A 1170-amino-acid polypeptide reads, in one-letter code: MGLAWGLGVLLLLHACGSNRIPESGGDNSVFDIFELTGAARKRSGRRLVKGPDPSSPAFRIEDANLIPPVPDKKFQDLVDAVRAEKGFLLLASLRQMKKTRGTLLAVERKDHSGQVFSVISNGKAGTLDLSLTVQGKQHVVSVEEALLATGQWKSITLFVQEDRAQLYIDCEKMENAELDVPIQSIFTRDLASIARLRIAKGGVNDNFQGVLQNVRFVFGTTPEDILRNKGCSSSTSVFVTLDNNVVNGSSPAIRTDYIGHKTKDLQAICGISCDELSSMVLELRGLRTIVTTLQDSIRKVTEENKELANELRRPPLCYHNGVQYRTGDEWTVDSCTECRCQNSVTICKKVSCPIMPCSNATVPDGECCPRCWPSDSADDGWSPWSEWTSCSVTCGNGIQQRGRSCDSLNNRCEGSSVQTRTCHIQECDKRFKQDGGWSHWSPWSSCSVTCGDGVITRIRLCNSPSPQMNGKPCEGKARETKACQKDSCPINGGWGPWSPWDICSVTCGGGVQKRSRLCNNPKPQFGGKDCVGDVTENQICNKQDCPIDGCLSNPCFAGVQCTSYPDGSWKCGACPPGYSGDGVECKDVDECKEVPDACFNHNGEHRCENTDPGYNCLPCPPRFTGSQPFGRGVEHATANKQVCKPRNPCTDGTHDCNKNAKCNYLGHYSDPMYRCECKPGYAGNGIICGEDTDLDGWPNEDLLCVANATYHCRKDNCPNLPNSGQEDYDKDGIGDACDDDDDNDKIPDDRDNCPFHYNPAQYDYDRDDVGDRCDNCPYNHNPDQADTDNNGEGDACAADIDGDSILNERDNCQYVYNVDQKDTDMDGVGDQCDNCPLEHNPDQLDSDSDRIGDTCDNNQDIDEDGHQNNLDNCPYVPNANQADHDKDGKGDACDHDDDNDGIPDDRDNCRLVPNPDQKDSDGDGRGDACKDDFDQDKVPDIDDICPENVDISETDFRRFQMIPLDPKGTSQNDPNWVVRHQGKELVQTVNCDPGLAVGYDEFNAVDFSGTFFINTERDDDYAGFVFGYQSSSRFYVVMWKQVTQSYWDTNPTRAQGYSGLSVKVVNSTTGPGEHLRNALWHTGNTSGQVRTLWHDPRHIGWKDFTAYRWHLSHRPKTGFIRVVMYEGKKIMADSGPIYDKTYAGGRLGLFVFSQEMVFFSDLKYECRDS.

The first 18 residues, 1-18 (MGLAWGLGVLLLLHACGS), serve as a signal peptide directing secretion. Residues 47–95 (RLVKGPDPSSPAFRIEDANLIPPVPDKKFQDLVDAVRAEKGFLLLASLR) form a heparin-binding region. Residues 65-270 (NLIPPVPDKK…HKTKDLQAIC (206 aa)) form the Laminin G-like domain. A disulfide bridge links Cys171 with Cys232. N-linked (GlcNAc...) asparagine glycosylation is found at Asn248 and Asn360. Residues 316-373 (PLCYHNGVQYRTGDEWTVDSCTECRCQNSVTICKKVSCPIMPCSNATVPDGECCPRCW) enclose the VWFC domain. TSP type-1 domains follow at residues 379-429 (DDGW…QECD), 435-490 (DGGW…DSCP), and 492-547 (NGGW…QDCP). Disulfide bonds link Cys391-Cys423, Cys395-Cys428, Cys406-Cys413, Cys447-Cys484, Cys451-Cys489, Cys462-Cys474, Cys504-Cys541, Cys508-Cys546, Cys519-Cys531, Cys551-Cys562, Cys556-Cys572, Cys575-Cys586, Cys592-Cys608, Cys599-Cys617, Cys620-Cys644, Cys650-Cys663, Cys657-Cys676, Cys678-Cys689, Cys705-Cys713, Cys718-Cys738, Cys754-Cys774, Cys777-Cys797, Cys813-Cys833, Cys836-Cys856, Cys874-Cys894, Cys910-Cys930, and Cys946-Cys1167. The EGF-like 1 domain maps to 547-587 (PIDGCLSNPCFAGVQCTSYPDGSWKCGACPPGYSGDGVECK). O-linked (Xyl) serine glycosylation occurs at Ser553. The EGF-like 2 domain occupies 646-690 (PRNPCTDGTHDCNKNAKCNYLGHYSDPMYRCECKPGYAGNGIICG). TSP type-3 repeat units lie at residues 691–726 (EDTD…NSGQ), 727–762 (EDYD…NPAQ), 763–785 (YDYD…NPDQ), 786–821 (ADTD…NVDQ), 822–844 (KDTD…NPDQ), 845–882 (LDSD…NANQ), 883–918 (ADHD…NPDQ), and 919–954 (KDSD…DISE). Asn708 carries an N-linked (GlcNAc...) asparagine glycan. Residues 839 to 944 (EHNPDQLDSD…DQDKVPDIDD (106 aa)) form a disordered region. Composition is skewed to basic and acidic residues over residues 840–854 (HNPD…RIGD), 883–894 (ADHDKDGKGDAC), and 917–941 (DQKD…KVPD). The short motif at 926–928 (RGD) is the Cell attachment site element. The TSP C-terminal domain occupies 958–1170 (RRFQMIPLDP…SDLKYECRDS (213 aa)). 2 N-linked (GlcNAc...) asparagine glycosylation sites follow: Asn1067 and Asn1085.

The protein belongs to the thrombospondin family. As to quaternary structure, homotrimer; disulfide-linked. Can bind to fibrinogen, fibronectin, laminin, type V collagen and integrins alpha-V/beta-1, alpha-V/beta-3 and alpha-IIb/beta-3. Binds heparin. Interacts (via the C-terminal domain) with CD47. Interacts (via the TSP type I repeats) with CD36; the interaction conveys an antiangiogenic effect. Interacts (via the TSP type I repeats) with HRG; the interaction blocks the antiangiogenic effect of THBS1 with CD36. Interacts with ATF6 (via lumenal domain). Interacts with FN1; this interaction is enhanced by TNFAIP6, which may act as a bridging molecule between FN1 and THBS1. Interacts with SIRPA; the interaction stimulates phosphorylation of SIRPA. In terms of tissue distribution, odontoblasts.

It localises to the secreted. It is found in the cell surface. The protein localises to the extracellular space. The protein resides in the extracellular matrix. Its subcellular location is the endoplasmic reticulum. It localises to the sarcoplasmic reticulum. Its function is as follows. Adhesive glycoprotein that mediates cell-to-cell and cell-to-matrix interactions. Multifunctional, involved in inflammation, angiogenesis, wound healing, reactive oxygen species (ROS) signaling, nitrous oxide (NO) signaling, apoptosis, senescence, aging, cellular self-renewal, stemness, and cardiovascular and metabolic homeostasis. Negatively modulates dendritic cell activation and cytokine release, as part of an autocrine feedback loop, contributing to the resolution of inflammation and immune homeostasis. Ligand for receptor CD47. Modulates nitrous oxide (NO) signaling via CD47, hence playing a role as a pressor agent, supporting blood pressure. Plays a role in endothelial cell senescence, acting via CD47, by increasing the abundance and activation of NADPH oxidase NOX1, and so generating excess ROS. Inhibits stem cell self-renewal, acting via CD47 signaling, probably by regulation of the stem cell transcription factors POU5F1/OCT4, SOX2, MYC/c-Myc and KLF4. Negatively modulates wound healing, acting via CD47. Ligand for receptor CD36. Involved in inducing apoptosis in podocytes in response to elevated free fatty acids, acting via CD36. Plays a role in suppressing angiogenesis, acting, depending on context, via CD36 or CD47. Promotes cellular senescence in a TP53-CDKN1A-RB1 signaling-dependent manner. Ligand for immunoglobulin-like cell surface receptor SIRPA. Involved in ROS signaling in non-phagocytic cells, stimulating NADPH oxidase-derived ROS production, acting via interaction with SIRPA. Plays a role in metabolic dysfunction in diet-induced obesity, perhaps acting by exacerbating adipose inflammatory activity; its effects may be mediated, at least in part, through enhanced adipocyte proliferation. Plays a role in ER stress response, via its interaction with the activating transcription factor 6 alpha (ATF6) which produces adaptive ER stress response factors. May be involved in age-related conditions, including metabolic dysregulation, during normal aging. In Bos taurus (Bovine), this protein is Thrombospondin-1 (THBS1).